We begin with the raw amino-acid sequence, 294 residues long: Bidirectional sugar transporter SWEET13 (294 aa).

The Extracellular portion of the chain corresponds to 1-7; that stretch reads MALTNNL. The helical transmembrane segment at 8–28 threads the bilayer; the sequence is WAFVFGILGNIISFVVFLAPV. The MtN3/slv 1 domain maps to 10–97; the sequence is FVFGILGNII…VLFVSYANKK (88 aa). The Cytoplasmic segment spans residues 29-42; it reads PTFVRICKKKSTEG. Residues 43 to 63 form a helical membrane-spanning segment; sequence FQSLPYVSALFSAMLWIYYAM. Residues 64–69 are Extracellular-facing; it reads QKDGTA. A helical transmembrane segment spans residues 70–90; it reads FLLITINAFGCVIETIYIVLF. Topologically, residues 91 to 104 are cytoplasmic; sequence VSYANKKTRISTLK. The helical transmembrane segment at 105 to 125 threads the bilayer; it reads VLGLLNFLGFAAIVLVCELLT. Topologically, residues 126 to 132 are extracellular; that stretch reads KGSTREK. A helical transmembrane segment spans residues 133 to 153; the sequence is VLGGICVGFSVSVFAAPLSIM. Residues 133 to 216 form the MtN3/slv 2 domain; it reads VLGGICVGFS…MILYIIFKYY (84 aa). The Cytoplasmic portion of the chain corresponds to 154 to 166; the sequence is RVVVRTRSVEFMP. Residues 167-187 form a helical membrane-spanning segment; that stretch reads FSLSLFLTISAVTWLFYGLAI. The Extracellular portion of the chain corresponds to 188-192; sequence KDFYV. A helical membrane pass occupies residues 193–213; sequence ALPNVLGAFLGAVQMILYIIF. The Cytoplasmic segment spans residues 214 to 294; it reads KYYKTPVAQK…NKDVQKQSQV (81 aa). Positions 273 to 294 are disordered; it reads KSQNMTDPKDQINKDVQKQSQV. Residues 279 to 294 are compositionally biased toward basic and acidic residues; it reads DPKDQINKDVQKQSQV.

It belongs to the SWEET sugar transporter family. As to quaternary structure, forms heterooligomers with SWEET1, SWEET3, SWEET6, SWEET7, SWEET8, SWEET9, SWEET11 and SWEET17. As to expression, expressed at low levels in leaves.

Its subcellular location is the cell membrane. In terms of biological role, mediates both low-affinity uptake and efflux of sugar across the plasma membrane. Involved in nurturing the male gametophyte. The protein is Bidirectional sugar transporter SWEET13 of Arabidopsis thaliana (Mouse-ear cress).